Reading from the N-terminus, the 316-residue chain is Geminin coiled-coil domain-containing protein 1 (316 aa).

Positions 82–117 form a coiled coil; the sequence is QISANKQLQDTLLQKEEELSRLHEENNKLKEFLNSA. Polar residues-rich tracts occupy residues 134-155 and 207-234; these read GQSS…STPG and MSLQ…QAAT. Disordered stretches follow at residues 134–160 and 207–269; these read GQSS…KAKR and MSLQ…DVAP. Phosphothreonine; by cdk2 is present on Thr-153. The segment covering 235 to 252 has biased composition (low complexity); that stretch reads SCSLSPSQCSSASLPESE. Polar residues predominate over residues 253–262; that stretch reads TASPLSSPTY.

This sequence belongs to the GEMC1 family. As to quaternary structure, interacts with topbp1. Interacts with Cdc45l and the kinase cdk2-cyclin-E (the interaction is direct). In terms of processing, highly phosphorylated by cdk2; stimulates initiation of DNA replication. In terms of tissue distribution, expressed in most tissues. Enriched in proliferating cells from skin and gut.

Its subcellular location is the nucleus. In terms of biological role, regulator of DNA replication. Promotes initiation of chromosomal DNA replication by mediating topbp1- and cdk2-dependent recruitment of cdc45l onto replication origins. In Xenopus laevis (African clawed frog), this protein is Geminin coiled-coil domain-containing protein 1 (gmnc).